The chain runs to 449 residues: Phosphoglucosamine mutase (449 aa).

The active-site Phosphoserine intermediate is the Ser101. Residues Ser101, Asp242, Asp244, and Asp246 each contribute to the Mg(2+) site. At Ser101 the chain carries Phosphoserine.

It belongs to the phosphohexose mutase family. Mg(2+) is required as a cofactor. In terms of processing, activated by phosphorylation.

The catalysed reaction is alpha-D-glucosamine 1-phosphate = D-glucosamine 6-phosphate. Catalyzes the conversion of glucosamine-6-phosphate to glucosamine-1-phosphate. The sequence is that of Phosphoglucosamine mutase from Bradyrhizobium sp. (strain BTAi1 / ATCC BAA-1182).